A 435-amino-acid polypeptide reads, in one-letter code: MLDSKLLRTELDETAEKLARRGFKLDVETLRTLEEQRKSLQVITEDLQAQRNSRSKSIGQAKAKGDHEEADRIMADVATLGSELDDAKAGLAELQQQIESIALSVPNLPDESVPYGKDEDENVEVLRWGTPLTYDFEVRDHVALGELADGLDFASAVKISGSRFIVMKGQFARLHRALSQFMLDLHTEEHGYMEMYVPYLVNHDSLYGTGQLPKFGEDLFHTSPLTEQVSDVPLKMLSLIPTAEVPVTNMVRDTITEEADLPLKMTAHTPCFRSEAGSYGRDTRGLIRMHQFDKVELVQITKPEDSMAALEELTGHAEKVLQLLELPYRKVILCTGDMGFGSRKTYDLEVWVPAQETYREISSCSNMWDFQARRMQARFRRQGEKKPELVHTLNGSGLAVGRTMVAILENFQQADGKIAIPEVLRKYMNGVEFIG.

242 to 244 (TAE) contributes to the L-serine binding site. Residue 273 to 275 (RSE) coordinates ATP. Position 296 (Glu296) interacts with L-serine. 360–363 (EISS) is a binding site for ATP. L-serine is bound at residue Ser396.

This sequence belongs to the class-II aminoacyl-tRNA synthetase family. Type-1 seryl-tRNA synthetase subfamily. In terms of assembly, homodimer. The tRNA molecule binds across the dimer.

The protein resides in the cytoplasm. It carries out the reaction tRNA(Ser) + L-serine + ATP = L-seryl-tRNA(Ser) + AMP + diphosphate + H(+). The enzyme catalyses tRNA(Sec) + L-serine + ATP = L-seryl-tRNA(Sec) + AMP + diphosphate + H(+). It participates in aminoacyl-tRNA biosynthesis; selenocysteinyl-tRNA(Sec) biosynthesis; L-seryl-tRNA(Sec) from L-serine and tRNA(Sec): step 1/1. Functionally, catalyzes the attachment of serine to tRNA(Ser). Is also able to aminoacylate tRNA(Sec) with serine, to form the misacylated tRNA L-seryl-tRNA(Sec), which will be further converted into selenocysteinyl-tRNA(Sec). The polypeptide is Serine--tRNA ligase (Aliivibrio salmonicida (strain LFI1238) (Vibrio salmonicida (strain LFI1238))).